Consider the following 287-residue polypeptide: Ribonuclease HII (287 aa).

An RNase H type-2 domain is found at 61–287 (ALQIGVDEAG…FAPVRKALES (227 aa)). A divalent metal cation is bound by residues D67, E68, and D186.

It belongs to the RNase HII family. Mn(2+) is required as a cofactor. Requires Mg(2+) as cofactor.

Its subcellular location is the cytoplasm. The catalysed reaction is Endonucleolytic cleavage to 5'-phosphomonoester.. Functionally, endonuclease that specifically degrades the RNA of RNA-DNA hybrids. The protein is Ribonuclease HII of Psychrobacter arcticus (strain DSM 17307 / VKM B-2377 / 273-4).